Reading from the N-terminus, the 294-residue chain is Homeobox protein Nkx-2.5 (294 aa).

Disordered regions lie at residues 48–69 (GSEPPALPELPEPPPAKPPAAF) and 102–122 (EQEKRELEDPERPRQRKRRKP). The segment covering 52–69 (PALPELPEPPPAKPPAAF) has biased composition (pro residues). A compositionally biased stretch (basic and acidic residues) spans 102–114 (EQEKRELEDPERP). The homeobox DNA-binding region spans 119 to 178 (RRKPRVLFSQAQVYELERRFKQQKYLSAPERDHLANVLKLTSTQVKIWFQNRRYKCKRQR).

It belongs to the NK-2 homeobox family. Homodimer (via the homeobox); binds DNA as homodimer.

Its subcellular location is the nucleus. Transcription factor required for the development of the heart and the spleen. Implicated in commitment to and/or differentiation of the myocardial lineage. Binds to the core DNA motif of promoter. This Gallus gallus (Chicken) protein is Homeobox protein Nkx-2.5 (NKX-2.5).